A 371-amino-acid polypeptide reads, in one-letter code: Phospho-N-acetylmuramoyl-pentapeptide-transferase (371 aa).

11 helical membrane passes run 21 to 41, 46 to 66, 92 to 112, 119 to 139, 156 to 176, 182 to 202, 216 to 236, 241 to 261, 268 to 288, 296 to 316, and 349 to 369; these read NHILVLFGLISITCVFSDFYY, LTIPFIITTLVSSIITFIGIP, PTMGGIFFIPIGIIVSNILYF, IILTLSFVIIFFMFIGFIDDF, ILLQSLISLIFILICASNNLI, IANKVFNIGNLIYPLGIFVLL, GLLSGCSVLIFTGLAISILIE, NSTLAPLCIAMAGACMGFLFL, LFMGDSGSLAIGASLGGIALI, LIMGGILAAESISVIIQVSIF, and IVSSFWLITLFLVIINLIFLI.

The protein belongs to the glycosyltransferase 4 family. MraY subfamily. Mg(2+) is required as a cofactor.

It localises to the cell inner membrane. It catalyses the reaction UDP-N-acetyl-alpha-D-muramoyl-L-alanyl-gamma-D-glutamyl-meso-2,6-diaminopimeloyl-D-alanyl-D-alanine + di-trans,octa-cis-undecaprenyl phosphate = di-trans,octa-cis-undecaprenyl diphospho-N-acetyl-alpha-D-muramoyl-L-alanyl-D-glutamyl-meso-2,6-diaminopimeloyl-D-alanyl-D-alanine + UMP. Its pathway is cell wall biogenesis; peptidoglycan biosynthesis. Catalyzes the initial step of the lipid cycle reactions in the biosynthesis of the cell wall peptidoglycan: transfers peptidoglycan precursor phospho-MurNAc-pentapeptide from UDP-MurNAc-pentapeptide onto the lipid carrier undecaprenyl phosphate, yielding undecaprenyl-pyrophosphoryl-MurNAc-pentapeptide, known as lipid I. This chain is Phospho-N-acetylmuramoyl-pentapeptide-transferase, found in Prochlorococcus marinus (strain NATL2A).